Consider the following 195-residue polypeptide: Transmembrane protein 239 (195 aa).

2 helical membrane passes run 105-125 (LWGL…HALF) and 145-171 (HLLP…LLLF).

The protein localises to the membrane. This is Transmembrane protein 239 (TMEM239) from Homo sapiens (Human).